The following is a 615-amino-acid chain: Increased rDNA silencing protein 4 (615 aa).

Disordered regions lie at residues 38-135 (SNEV…SSHS), 152-260 (LLGI…NRSQ), 277-304 (PSIASSNTTTTTSNQGSGLPNLVPNYSS), and 323-445 (KPKH…NEDK). The span at 50–65 (VSRNPQTRLSEPSLQK) shows a compositional bias: polar residues. Low complexity-rich tracts occupy residues 121-135 (HSQSKLSSDNNSSHS) and 157-168 (SRSSSRNGSNES). Phosphoserine is present on Ser180. Over residues 184–198 (LLTSFSSGRRLSSSS) the composition is skewed to low complexity. The span at 248–260 (NPDTSDVISNRSQ) shows a compositional bias: polar residues. Residues 281 to 290 (SSNTTTTTSN) show a composition bias toward low complexity. Residues 365–377 (ENDHASSLHEGNL) are compositionally biased toward basic and acidic residues. Acidic residues predominate over residues 389–402 (DVYDDTDSDSESDQ). A compositionally biased stretch (basic residues) spans 409–438 (KPRKRDRIKRKIRNSANKTAHHRPIHRTRD). In terms of domain architecture, EH spans 460-571 (ERKRYESMWV…QCVWDSVDRY (112 aa)).

The protein belongs to the IRS4 family. As to quaternary structure, interacts with INP51.

Functionally, with TAX4, acts as a positive regulator of INP51 activity and phosphatidylinositol 4,5-bisphosphate turnover. Negatively regulates signaling through the cell integrity pathway, including the MAP kinase SLT2. Also seems to be involved in rDNA silencing. The protein is Increased rDNA silencing protein 4 (IRS4) of Saccharomyces cerevisiae (strain YJM789) (Baker's yeast).